A 524-amino-acid chain; its full sequence is MLVETYDPFQHLAVSAFVAAIPILLLLLCLTVFKMQGIQAALLTLLVTFFIAGLVFHLPFGESIGSIVQGVVQGLWPIGYIIVMAVWLYKIAVASGKFAVLRGSIIGISRDQRIQLLLIGFCFNAFLEGAAGFGVPIAICAVLLVSLGFKPLQAAMLCLIANGASGAFGAIGIPVGIIDTLGLEGQVTSMDVSMMTALTLPMINFTIPFLLIWLMDSWKGIKEILPAILVTSSVYTVSQALITIFIGPELADIIPSLLTMGLLALFLKRWQPRNTFLLNGNGCESEHASLKDVIKAWSPFYLLTMFVFLWSLPAFKGLLAEGGALEFAKWAFVVPGSSIEVGVDFIGATGTAILLAAVTTVTTTKMIRMKESISLLKKVIVDFSIPIMMICAIIGIAKLMTYGGLTMALGEAVATTGAFFPFLSPILGWIGVFMTGSVVNNNTLFAPIQTTAGAIIGTNPSLLVAANTAGGVMAKLVSPQSIAIATAAVGETGNEAALTKMTLKYSFGLLVFVSVWTYILSLLF.

Transmembrane regions (helical) follow at residues 12–34 (LAVS…TVFK), 38–60 (IQAA…HLPF), 67–89 (IVQG…VWLY), 127–149 (LEGA…SLGF), 156–178 (MLCL…VGII), 193–215 (SMMT…IWLM), 224–246 (ILPA…TIFI), 250–267 (LADI…ALFL), 297–319 (WSPF…KGLL), 339–361 (IEVG…VTTV), 374–396 (SLLK…IIGI), 411–433 (EAVA…IGVF), and 505–522 (YSFG…ILSL).

Belongs to the lactate permease family.

The protein resides in the cell membrane. In terms of biological role, may play a role in L-lactate transport. The polypeptide is L-lactate permease (lctP) (Halalkalibacterium halodurans (strain ATCC BAA-125 / DSM 18197 / FERM 7344 / JCM 9153 / C-125) (Bacillus halodurans)).